A 156-amino-acid polypeptide reads, in one-letter code: MGIFAFENEQSSTVAPAKLYKALTKDSDEIVPKVIEPIQSVEIVEGNGGPGTIKKIIAIHDGHTSFVLHKLDAIDEANLTYNYSIIGGEGLDESLEKISYESKILPGPDGGSIGKINVKFHTKGDVLSETVRDQAKFKGLGLFKAIEGYVLAHPDY.

Trans-zeatin-binding residues include Asn8 and Asp28. Pro32 and Ile38 together coordinate Ca(2+). Positions 54, 133, and 136 each coordinate trans-zeatin.

This sequence belongs to the BetVI family. In terms of tissue distribution, expressed constitutively in roots.

The protein localises to the cytoplasm. Its subcellular location is the cytosol. In terms of biological role, class II ribonuclease (RNase). Binds to cytokinins. Interacts with melatonin. In Lupinus luteus (European yellow lupine), this protein is Protein LlR18A (LLR18A).